The sequence spans 928 residues: BCAS3 microtubule associated cell migration factor (928 aa).

The residue at position 1 (M1) is an N-acetylmethionine. One copy of the WD repeat lies at 69 to 114; sequence DLNDTSRNLEFHEIHSTGNEPPLLIMIGYSDGMQVWSIPISGEAQE. Residue K215 forms a Glycyl lysine isopeptide (Lys-Gly) (interchain with G-Cter in SUMO1); alternate linkage. K215 is covalently cross-linked (Glycyl lysine isopeptide (Lys-Gly) (interchain with G-Cter in SUMO2); alternate). Required for recruitment to preautophagosomal structure in response to mitophagy regions lie at residues 254–312 and 437–560; these read RGGA…SRRS and YGGQ…IKAP. Residues S461, S480, and S488 each carry the phosphoserine modification. 2 disordered regions span residues 472–515 and 755–777; these read TSKQ…PGNP and TTVI…PQPL. Low complexity-rich tracts occupy residues 480–494, 505–514, and 755–771; these read SPVP…GSPL, NNFTNNNPGN, and TTVI…HGPS. S838, S886, and S898 each carry phosphoserine. Positions 868 to 928 are disordered; the sequence is ESPSRDVVGS…PLSLFPTGFP (61 aa). The segment covering 887–901 has biased composition (low complexity); that stretch reads IETLSNSSGSTSGSI.

The protein belongs to the BCAS3 family. Interacts with histone H3, ESR1, KAT2B and PELP1; the interactions occur in a estrogen-dependent manner. Interacts with beta-tubulin and VIM. Interacts (via C-terminal) with PHAF1; the interaction is requrired for the association with the phagophore. Expressed in stomach, liver, lung, kidney, prostate, testis, thyroid gland, adrenal gland, brain, heart, skeletal muscle, colon, spleen, small intestine, placenta, blood leukocyte and mammary epithelial cells. Expressed in undifferentiated ES cells. Expressed in blood islands and nascent blood vessels derived from differentiated ES cells into embryoid bodies (BD). Expressed in endothelial cells. Not detected in brain. Expressed in brain tumors (at protein level). Expressed in brain. Highly expressed in breast cancers and in glioma cell lines.

It localises to the nucleus. The protein localises to the cytoplasm. It is found in the cytoskeleton. Its subcellular location is the preautophagosomal structure. In terms of biological role, plays a role in angiogenesis. Participates in the regulation of cell polarity and directional endothelial cell migration by mediating both the activation and recruitment of CDC42 and the reorganization of the actin cytoskeleton at the cell leading edge. Promotes filipodia formation. Functions synergistically with PELP1 as a transcriptional coactivator of estrogen receptor-responsive genes. Stimulates histone acetyltransferase activity. Binds to chromatin. Plays a regulatory role in autophagic activity. In complex with PHAF1, associates with the preautophagosomal structure during both non-selective and selective autophagy. Probably binds phosphatidylinositol 3-phosphate (PtdIns3P) which would mediate the recruitment preautophagosomal structures. In Homo sapiens (Human), this protein is BCAS3 microtubule associated cell migration factor.